The primary structure comprises 1053 residues: CRISPR-associated endonuclease Cas9 (1053 aa).

Residues Met1–Val41 form a ruvC-I region. Asp10 serves as the catalytic For RuvC-like nuclease domain. A Mg(2+)-binding site is contributed by Asp10. The tract at residues Val41–Lys426 is recognition lobe. The segment at Glu435–Glu481 is ruvC-II. Positions 477 and 481 each coordinate Mg(2+). The 167-residue stretch at Arg480–Leu646 folds into the HNH Cas9-type domain. The Proton acceptor for HNH nuclease domain role is filled by His557. Residues Arg650–Val775 form a ruvC-III region. His701 is a Mg(2+) binding site. An RNA-binding site is contributed by Tyr789. 2 PAM substrate-binding regions span residues Tyr882–Ala889 and Asn985–Glu993. The interval Lys910–Gly1053 is PAM-interacting domain (PI).

The protein belongs to the CRISPR-associated Cas9 family. Subtype II-A subfamily. As to quaternary structure, monomer. Binds crRNA and tracrRNA. Mg(2+) serves as cofactor.

In terms of biological role, CRISPR (clustered regularly interspaced short palindromic repeat) is an adaptive immune system that provides protection against mobile genetic elements (viruses, transposable elements and conjugative plasmids). CRISPR clusters contain spacers, sequences complementary to antecedent mobile elements, and target invading nucleic acids. CRISPR clusters are transcribed and processed into CRISPR RNA (crRNA). In type II CRISPR systems correct processing of pre-crRNA requires a trans-encoded small RNA (tracrRNA), endogenous ribonuclease 3 (rnc) and this protein. The tracrRNA serves as a guide for ribonuclease 3-aided processing of pre-crRNA. Subsequently Cas9/crRNA/tracrRNA endonucleolytically cleaves linear or circular dsDNA target complementary to the spacer; Cas9 is inactive in the absence of the 2 guide RNAs (gRNA). Cas9 recognizes the protospacer adjacent motif (PAM) in the CRISPR repeat sequences to help distinguish self versus nonself, as targets within the bacterial CRISPR locus do not have PAMs. PAM recognition is also required for catalytic activity. The polypeptide is CRISPR-associated endonuclease Cas9 (Staphylococcus aureus).